The chain runs to 89 residues: Small ribosomal subunit protein uS15 (89 aa).

A disordered region spans residues 1–25 (MSLDTTEKQQLINTHQTHGTDTGSA). Over residues 8-25 (KQQLINTHQTHGTDTGSA) the composition is skewed to polar residues.

The protein belongs to the universal ribosomal protein uS15 family. As to quaternary structure, part of the 30S ribosomal subunit. Forms a bridge to the 50S subunit in the 70S ribosome, contacting the 23S rRNA.

Functionally, one of the primary rRNA binding proteins, it binds directly to 16S rRNA where it helps nucleate assembly of the platform of the 30S subunit by binding and bridging several RNA helices of the 16S rRNA. Its function is as follows. Forms an intersubunit bridge (bridge B4) with the 23S rRNA of the 50S subunit in the ribosome. In Parasynechococcus marenigrum (strain WH8102), this protein is Small ribosomal subunit protein uS15.